Reading from the N-terminus, the 426-residue chain is Enolase (426 aa).

Residue Q163 participates in (2R)-2-phosphoglycerate binding. The Proton donor role is filled by E205. Mg(2+) is bound by residues D242, E285, and D312. (2R)-2-phosphoglycerate is bound by residues K337, R366, S367, and K388. K337 functions as the Proton acceptor in the catalytic mechanism.

It belongs to the enolase family. Requires Mg(2+) as cofactor.

It localises to the cytoplasm. The protein localises to the secreted. Its subcellular location is the cell surface. The enzyme catalyses (2R)-2-phosphoglycerate = phosphoenolpyruvate + H2O. The protein operates within carbohydrate degradation; glycolysis; pyruvate from D-glyceraldehyde 3-phosphate: step 4/5. Catalyzes the reversible conversion of 2-phosphoglycerate (2-PG) into phosphoenolpyruvate (PEP). It is essential for the degradation of carbohydrates via glycolysis. The chain is Enolase from Phenylobacterium zucineum (strain HLK1).